We begin with the raw amino-acid sequence, 66 residues long: uncharacterized protein (66 aa).

The chain crosses the membrane as a helical span at residues 32–49; that stretch reads WAFSLLIAGSAFLWIYMR.

The protein resides in the membrane. This is an uncharacterized protein from Bacillus subtilis (strain 168).